The chain runs to 505 residues: Lysine--tRNA ligase (505 aa).

Residues glutamate 415 and glutamate 422 each coordinate Mg(2+).

The protein belongs to the class-II aminoacyl-tRNA synthetase family. In terms of assembly, homodimer. Mg(2+) serves as cofactor.

It localises to the cytoplasm. It carries out the reaction tRNA(Lys) + L-lysine + ATP = L-lysyl-tRNA(Lys) + AMP + diphosphate. This chain is Lysine--tRNA ligase, found in Serratia proteamaculans (strain 568).